The primary structure comprises 434 residues: Oxysterol-binding protein homolog 5 (434 aa).

Residues 18 to 371 (SSFNGDLSSL…KQVDYMNENT (354 aa)) form an OSBP-related domain (ORD) region. Residue 24–29 (LSSLSA) participates in a 1,2-diacyl-sn-glycero-3-phospho-(1D-myo-inositol 4-phosphate) binding. Gln96 is a binding site for 20-hydroxycholesterol. Gln96 is a binding site for 25-hydroxycholesterol. Gln96 and Arg100 together coordinate 7beta-hydroxycholesterol. Gln96 serves as a coordination point for cholesterol. Gln96 contacts ergosterol. Residues 109-112 (KPLN), 143-144 (HH), Lys335, Glu339, and Arg343 contribute to the a 1,2-diacyl-sn-glycero-3-phospho-(1D-myo-inositol 4-phosphate) site. Ser389 carries the phosphoserine modification.

This sequence belongs to the OSBP family.

It localises to the vacuole membrane. Its subcellular location is the bud neck. Functionally, lipid transport protein (LTP) involved in non-vesicular transfer of lipids between membranes. Functions in phosphoinositide-coupled directional transport of various lipids by carrying the lipid molecule in a hydrophobic pocket and transferring it between membranes through the cytosol. Involved in maintenance of intracellular sterol distribution and homeostasis. Plays a role in ergosterol synthesis. Binds and transports sterol. May be involved in ergosterol transport from the plasma membrane (PM) to the ER. The polypeptide is Oxysterol-binding protein homolog 5 (Saccharomyces cerevisiae (strain ATCC 204508 / S288c) (Baker's yeast)).